Consider the following 431-residue polypeptide: Histidine--tRNA ligase (431 aa).

It belongs to the class-II aminoacyl-tRNA synthetase family. In terms of assembly, homodimer.

The protein localises to the cytoplasm. The enzyme catalyses tRNA(His) + L-histidine + ATP = L-histidyl-tRNA(His) + AMP + diphosphate + H(+). This is Histidine--tRNA ligase from Ligilactobacillus salivarius (strain UCC118) (Lactobacillus salivarius).